The following is a 32-amino-acid chain: Conotoxin pr6d (32 aa).

Residue P5 is modified to 4-hydroxyproline. 3 cysteine pairs are disulfide-bonded: C7–C20, C14–C25, and C19–C30.

As to expression, expressed by the venom duct.

It is found in the secreted. The chain is Conotoxin pr6d from Conus parius (Cone snail).